A 151-amino-acid polypeptide reads, in one-letter code: Ribosome maturation factor RimP (151 aa).

It belongs to the RimP family.

The protein localises to the cytoplasm. Functionally, required for maturation of 30S ribosomal subunits. This is Ribosome maturation factor RimP from Colwellia psychrerythraea (strain 34H / ATCC BAA-681) (Vibrio psychroerythus).